Here is a 381-residue protein sequence, read N- to C-terminus: MESGSTAASEEARSLRECELYVQKHNIQALLKDSIVQLCTARPERPMAFLREYFERLEKEEAKQIQNLQKAGTRTDSREDEISPPPPNPVVKGRRRRGAISAEVYTEEDAASYVRKVIPKDYKTMAALAKAIEKNVLFSHLDDNERSDIFDAMFSVSFIAGETVIQQGDEGDNFYVIDQGETDVYVNNEWATSVGEGGSFGELALIYGTPRAATVKAKTNVKLWGIDRDSYRRILMGSTLRKRKMYEEFLSKVSILESLDKWERLTVADALEPVQFEDGQKIVVQGEPGDEFFIILEGSAAVLQRRSENEEFVEVGRLGPSDYFGEIALLMNRPRAATVVARGPLKCVKLDRPRFERVLGPCSDILKRNIQQYNSFVSLSV.

M1 is modified (N-acetylmethionine). A dimerization and phosphorylation region spans residues 1 to 135 (MESGSTAASE…AALAKAIEKN (135 aa)). Position 3 is a phosphoserine (S3). The disordered stretch occupies residues 64-96 (QIQNLQKAGTRTDSREDEISPPPPNPVVKGRRR). T75 carries the phosphothreonine modification. S77 and S83 each carry phosphoserine. Positions 96–100 (RRGAI) match the Pseudophosphorylation motif motif. S101 is modified (phosphoserine). 3',5'-cyclic AMP is bound by residues 137–254 (LFSH…SKVS), E202, R211, 255–381 (ILES…SLSV), E326, and R335. Phosphoserine is present on S258.

It belongs to the cAMP-dependent kinase regulatory chain family. In terms of assembly, the inactive holoenzyme is composed of two regulatory chains and two catalytic chains. Activation by cAMP releases the two active catalytic monomers and the regulatory dimer. Interacts with PRKACA and PRKACB. PRKAR1A also interacts with RFC2; the complex may be involved in cell survival. Interacts with AKAP4. Interacts with RARA; the interaction occurs in the presence of cAMP or FSH and regulates RARA transcriptional activity. Interacts with the phosphorylated form of PJA2. Interacts with CBFA2T3. Interacts with PRKX; regulates this cAMP-dependent protein kinase. Interacts with smAKAP; this interaction may target PRKAR1A to the plasma membrane. Interacts with AICDA. Post-translationally, the pseudophosphorylation site binds to the substrate-binding region of the catalytic chain, resulting in the inhibition of its activity.

The protein localises to the cell membrane. Functionally, regulatory subunit of the cAMP-dependent protein kinases involved in cAMP signaling in cells. In Pongo abelii (Sumatran orangutan), this protein is cAMP-dependent protein kinase type I-alpha regulatory subunit (PRKAR1A).